The following is a 186-amino-acid chain: Ribosome-recycling factor (186 aa).

Belongs to the RRF family.

Its subcellular location is the cytoplasm. In terms of biological role, responsible for the release of ribosomes from messenger RNA at the termination of protein biosynthesis. May increase the efficiency of translation by recycling ribosomes from one round of translation to another. This chain is Ribosome-recycling factor, found in Bartonella bacilliformis (strain ATCC 35685 / KC583 / Herrer 020/F12,63).